Here is a 275-residue protein sequence, read N- to C-terminus: Large ribosomal subunit protein uL2c (275 aa).

The tract at residues 225–256 (AMNAVDHPHGGGEGRSPIGRSQPSTPWGRPAL) is disordered.

This sequence belongs to the universal ribosomal protein uL2 family. In terms of assembly, part of the 50S ribosomal subunit.

It is found in the plastid. It localises to the chloroplast. In Cyanidium caldarium (Red alga), this protein is Large ribosomal subunit protein uL2c (rpl2).